A 167-amino-acid polypeptide reads, in one-letter code: Leptin (167 aa).

The N-terminal stretch at 1–21 (MCWRPLCRFLWLWSYLSYVQA) is a signal peptide. A disulfide bond links C117 and C167.

It belongs to the leptin family.

The protein localises to the secreted. In terms of biological role, key player in the regulation of energy balance and body weight control. Once released into the circulation, has central and peripheral effects by binding LEPR, found in many tissues, which results in the activation of several major signaling pathways. In the hypothalamus, acts as an appetite-regulating factor that induces a decrease in food intake and an increase in energy consumption by inducing anorexinogenic factors and suppressing orexigenic neuropeptides, also regulates bone mass and secretion of hypothalamo-pituitary-adrenal hormones. In the periphery, increases basal metabolism, influences reproductive function, regulates pancreatic beta-cell function and insulin secretion, is pro-angiogenic for endothelial cell and affects innate and adaptive immunity. In the arcuate nucleus of the hypothalamus, activates by depolarization POMC neurons inducing FOS and SOCS3 expression to release anorexigenic peptides and inhibits by hyperpolarization NPY neurons inducing SOCS3 with a consequent reduction on release of orexigenic peptides. In addition to its known satiety inducing effect, has a modulatory role in nutrient absorption. In the intestine, reduces glucose absorption by enterocytes by activating PKC and leading to a sequential activation of p38, PI3K and ERK signaling pathways which exerts an inhibitory effect on glucose absorption. Acts as a growth factor on certain tissues, through the activation of different signaling pathways increases expression of genes involved in cell cycle regulation such as CCND1, via JAK2-STAT3 pathway, or VEGFA, via MAPK1/3 and PI3K-AKT1 pathways. May also play an apoptotic role via JAK2-STAT3 pathway and up-regulation of BIRC5 expression. Pro-angiogenic, has mitogenic activity on vascular endothelial cells and plays a role in matrix remodeling by regulating the expression of matrix metalloproteinases (MMPs) and tissue inhibitors of metalloproteinases (TIMPs). In innate immunity, modulates the activity and function of neutrophils by increasing chemotaxis and the secretion of oxygen radicals. Increases phagocytosis by macrophages and enhances secretion of pro-inflammatory mediators. Increases cytotoxic ability of NK cells. Plays a pro-inflammatory role, in synergy with IL1B, by inducing NOS2 which promotes the production of IL6, IL8 and Prostaglandin E2, through a signaling pathway that involves JAK2, PI3K, MAP2K1/MEK1 and MAPK14/p38. In adaptive immunity, promotes the switch of memory T-cells towards T helper-1 cell immune responses. Increases CD4(+)CD25(-) T-cell proliferation and reduces autophagy during TCR (T-cell receptor) stimulation, through MTOR signaling pathway activation and BCL2 up-regulation. This is Leptin (Lep) from Rattus norvegicus (Rat).